The primary structure comprises 362 residues: MGNTFGSLFRITTFGESHGGGVGVIIDGCPPRLEISPEEIQVDLDRRRPGQSKITTPRKEADQCEILSGVFEGKTLGTPIAILVRNKDARSQDYNEMAVKYRPSHADATYEAKYGIRNWQGGGRSSARETIGRVAAGAIAKKILAQFNGVEIVAYVKSIQDIEATVDSNTVTLEQVESNIVRCPDEECAEKMIERIDQVLRQKDSIGGVVECAIRNAPKGLGEPVFDKLEADLAKAMMSLPATKGFEFGSGFAGTLLTGSQHNDEYYLDEAGEWRTRTNRSGGVQGGISNGEPIIMRIAFKPTATIGQEQKTVSNIGEETTLAAKGRHDPCVLPRAVPMVEAMAALVLCDHLLRFQAQCKTL.

R47 contacts NADP(+). FMN is bound by residues 124 to 126, G286, 301 to 305, and R327; these read RSS and KPTAT.

It belongs to the chorismate synthase family. In terms of assembly, homotetramer. Requires FMNH2 as cofactor.

The enzyme catalyses 5-O-(1-carboxyvinyl)-3-phosphoshikimate = chorismate + phosphate. Its pathway is metabolic intermediate biosynthesis; chorismate biosynthesis; chorismate from D-erythrose 4-phosphate and phosphoenolpyruvate: step 7/7. Its function is as follows. Catalyzes the anti-1,4-elimination of the C-3 phosphate and the C-6 proR hydrogen from 5-enolpyruvylshikimate-3-phosphate (EPSP) to yield chorismate, which is the branch point compound that serves as the starting substrate for the three terminal pathways of aromatic amino acid biosynthesis. This reaction introduces a second double bond into the aromatic ring system. This Synechocystis sp. (strain ATCC 27184 / PCC 6803 / Kazusa) protein is Chorismate synthase.